Consider the following 381-residue polypeptide: Lipid-A-disaccharide synthase (381 aa).

The protein belongs to the LpxB family.

It carries out the reaction 2-N,3-O-bis[(3R)-3-hydroxytetradecanoyl]-alpha-D-glucosaminyl 1-phosphate + UDP-2-N,3-O-bis[(3R)-3-hydroxytetradecanoyl]-alpha-D-glucosamine = lipid A disaccharide (E. coli) + UDP + H(+). It catalyses the reaction a lipid X + a UDP-2-N,3-O-bis[(3R)-3-hydroxyacyl]-alpha-D-glucosamine = a lipid A disaccharide + UDP + H(+). The protein operates within glycolipid biosynthesis; lipid IV(A) biosynthesis; lipid IV(A) from (3R)-3-hydroxytetradecanoyl-[acyl-carrier-protein] and UDP-N-acetyl-alpha-D-glucosamine: step 5/6. Its function is as follows. Condensation of UDP-2,3-diacylglucosamine and 2,3-diacylglucosamine-1-phosphate to form lipid A disaccharide, a precursor of lipid A, a phosphorylated glycolipid that anchors the lipopolysaccharide to the outer membrane of the cell. The polypeptide is Lipid-A-disaccharide synthase (Erwinia tasmaniensis (strain DSM 17950 / CFBP 7177 / CIP 109463 / NCPPB 4357 / Et1/99)).